A 273-amino-acid polypeptide reads, in one-letter code: SUMO-1 cysteine protease S273R (273 aa).

Residues histidine 168 and asparagine 187 contribute to the active site. Glutamine 226 contributes to the substrate binding site. Catalysis depends on cysteine 232, which acts as the Nucleophile.

Belongs to the peptidase C63 family.

Its subcellular location is the host cytoplasm. It is found in the virion. Its function is as follows. Cysteine protease that plays several role during infection including processing of the structural polyprotein or inhibition of the host immune response. Catalyzes the maturation of the pp220 and pp62 polyprotein precursors into core-shell proteins. Plays a role in the disruption of host pyroptosis via specific cleavage of gasdermin D/GSDMD. In addition, strongly decreases the host cGAS-STING signaling by targeting IKBKE via its enzymatic activity. Also impairs host FOXJ1-mediated antiviral effect via degradation of FOXJ1. This Ornithodoros (relapsing fever ticks) protein is SUMO-1 cysteine protease S273R.